The chain runs to 141 residues: Small ribosomal subunit protein uS11 (141 aa).

The protein belongs to the universal ribosomal protein uS11 family. Part of the 30S ribosomal subunit.

Functionally, located on the platform of the 30S subunit. The protein is Small ribosomal subunit protein uS11 of Pyrobaculum calidifontis (strain DSM 21063 / JCM 11548 / VA1).